The sequence spans 248 residues: Lysine-rich arabinogalactan protein 19 (248 aa).

An N-terminal signal peptide occupies residues 1–24; it reads MESNSIIWSLLLASALISSFSVNA. Residues 25–37 are compositionally biased toward low complexity; that stretch reads QGPAASPVTSTTT. Positions 25-221 are disordered; it reads QGPAASPVTS…APSPNTNGGN (197 aa). 3 stretches are compositionally biased toward pro residues: residues 38-57, 67-86, and 94-171; these read APPPTTAAPPTTAAPPPTTT, PASPVTPPPAVTPTSPPAPK, and ATPP…PAPA. Residues 173–187 are compositionally biased toward basic residues; it reads TKHKRKHKHKRHHHA. Pro residues predominate over residues 189–203; that stretch reads APAPIPPSPPSPPVL. Serine 196 carries the GPI-anchor amidated serine lipid modification. A propeptide spans 197–248 (removed in mature form); that stretch reads PPSPPVLTDPQDTAPAPSPNTNGGNALNQLKGRAVMWLNTGLVILFLLAMTA.

This sequence belongs to the lysine-rich AGP family. O-glycosylated on the hydroxyproline residues. Strongly expressed in stems, moderately expressed in flowers and roots and weakly expressed in young leaves.

It is found in the cell membrane. Its function is as follows. Proteoglycan that seems to be implicated in diverse developmental roles such as differentiation, cell-cell recognition, embryogenesis and programmed cell death. The sequence is that of Lysine-rich arabinogalactan protein 19 (AGP19) from Arabidopsis thaliana (Mouse-ear cress).